We begin with the raw amino-acid sequence, 375 residues long: Erythronate-4-phosphate dehydrogenase (375 aa).

Residues Ser45 and Thr66 each coordinate substrate. The NAD(+) site is built by Asp146 and Thr175. Arg208 is a catalytic residue. Asp232 lines the NAD(+) pocket. Residue Glu237 is part of the active site. Catalysis depends on His254, which acts as the Proton donor. Gly257 contributes to the NAD(+) binding site. Position 258 (Tyr258) interacts with substrate.

This sequence belongs to the D-isomer specific 2-hydroxyacid dehydrogenase family. PdxB subfamily. In terms of assembly, homodimer.

The protein localises to the cytoplasm. The enzyme catalyses 4-phospho-D-erythronate + NAD(+) = (R)-3-hydroxy-2-oxo-4-phosphooxybutanoate + NADH + H(+). The protein operates within cofactor biosynthesis; pyridoxine 5'-phosphate biosynthesis; pyridoxine 5'-phosphate from D-erythrose 4-phosphate: step 2/5. Catalyzes the oxidation of erythronate-4-phosphate to 3-hydroxy-2-oxo-4-phosphonooxybutanoate. The chain is Erythronate-4-phosphate dehydrogenase from Yersinia enterocolitica serotype O:8 / biotype 1B (strain NCTC 13174 / 8081).